The primary structure comprises 348 residues: Doublesex- and mab-3-related transcription factor dmd-10 (348 aa).

2 DNA-binding regions (DM) span residues 43 to 91 (CQRC…YNQF) and 119 to 166 (CQKC…KIRR). The segment at 316–348 (SMSMSSSPSKDDESGDEDSDGLNSNSIIDVITV) is disordered.

The protein belongs to the DMRT family. Dimorphically expressed in the dimorphically connected interneuron AVG; expression is observed in the AVG in males, but not in hermaphrodites.

Its subcellular location is the nucleus. Its function is as follows. Transcription factor. Plays a role in neuronal signaling in polymodal sensory neuron ASH, downstream of sensory receptor activation. Required for maintenance of AVG synapses. The sequence is that of Doublesex- and mab-3-related transcription factor dmd-10 from Caenorhabditis elegans.